The chain runs to 143 residues: MKLHELTPSEGSRFSRRRIGRGDSSGQGKTSGRGQKGQKARGKVRVGFEGGQMPLYRRIPKRGFTNINRKEYAVVNLDGLNRFDDGAEVTPESLKEAGLVKKSSAVKVLGNGKLNKKLTVKASKFSATAVAAIEAAGGKTEVI.

A disordered region spans residues 1–47; that stretch reads MKLHELTPSEGSRFSRRRIGRGDSSGQGKTSGRGQKGQKARGKVRVG. The segment covering 23–35 has biased composition (gly residues); the sequence is DSSGQGKTSGRGQ.

The protein belongs to the universal ribosomal protein uL15 family. In terms of assembly, part of the 50S ribosomal subunit.

In terms of biological role, binds to the 23S rRNA. The chain is Large ribosomal subunit protein uL15 from Lactiplantibacillus plantarum (strain ATCC BAA-793 / NCIMB 8826 / WCFS1) (Lactobacillus plantarum).